Here is a 1396-residue protein sequence, read N- to C-terminus: uncharacterized protein (1396 aa).

88 to 95 (AYKKWGRS) lines the ATP pocket. Disordered regions lie at residues 146 to 165 (EKIH…LSPT) and 198 to 388 (KPCS…VKDL). Residues 198 to 221 (KPCSYSSSSSSSTVPPASTDTSSP) show a composition bias toward low complexity. Basic and acidic residues predominate over residues 242–268 (MHEKAQSRSRHEKESKLSSSTIEEKPA). The segment covering 286-300 (SWSSGSSEAGSSSSG) has biased composition (low complexity). Residues 312–327 (VKVRHKAREIRNRKGR) show a composition bias toward basic residues. 2 positions are modified to phosphoserine: S817 and S1083. The interval 1113–1137 (PISASELSPGGGSESEFESEKDEAS) is disordered. S1197 and S1339 each carry phosphoserine. The disordered stretch occupies residues 1347–1396 (TGERGSETKPNGLHRKMCSSASSDTGDTGSEAGGEWVGPSREELFSRTHL). The span at 1365 to 1376 (SSASSDTGDTGS) shows a compositional bias: low complexity. A compositionally biased stretch (basic and acidic residues) spans 1386 to 1396 (SREELFSRTHL).

This is an uncharacterized protein from Mus musculus (Mouse).